The primary structure comprises 447 residues: Phosphoglucosamine mutase (447 aa).

Serine 100 (phosphoserine intermediate) is an active-site residue. Positions 100, 239, 241, and 243 each coordinate Mg(2+). Serine 100 bears the Phosphoserine mark.

Belongs to the phosphohexose mutase family. It depends on Mg(2+) as a cofactor. In terms of processing, activated by phosphorylation.

It carries out the reaction alpha-D-glucosamine 1-phosphate = D-glucosamine 6-phosphate. Catalyzes the conversion of glucosamine-6-phosphate to glucosamine-1-phosphate. In Thermoanaerobacter pseudethanolicus (strain ATCC 33223 / 39E) (Clostridium thermohydrosulfuricum), this protein is Phosphoglucosamine mutase.